The following is a 421-amino-acid chain: Tryptophan synthase beta chain (421 aa).

At lysine 110 the chain carries N6-(pyridoxal phosphate)lysine.

This sequence belongs to the TrpB family. In terms of assembly, tetramer of two alpha and two beta chains. Pyridoxal 5'-phosphate serves as cofactor.

It carries out the reaction (1S,2R)-1-C-(indol-3-yl)glycerol 3-phosphate + L-serine = D-glyceraldehyde 3-phosphate + L-tryptophan + H2O. The protein operates within amino-acid biosynthesis; L-tryptophan biosynthesis; L-tryptophan from chorismate: step 5/5. Its function is as follows. The beta subunit is responsible for the synthesis of L-tryptophan from indole and L-serine. This chain is Tryptophan synthase beta chain (trpB), found in Mycobacterium intracellulare.